A 200-amino-acid chain; its full sequence is Glycerol-3-phosphate acyltransferase (200 aa).

The next 5 membrane-spanning stretches (helical) occupy residues 4–24 (FALCYMFAAYLLGSISSAVIV), 53–73 (WAALAVFVFDVLKGMIPVWCG), 80–100 (QFELGMVALGACLGHIFPIFF), 115–135 (IAPIGWGVMATMLGTWVLVFV), and 138–158 (GYSSLSAVISALLVPLYVWWF).

The protein belongs to the PlsY family. Probably interacts with PlsX.

It localises to the cell inner membrane. It carries out the reaction an acyl phosphate + sn-glycerol 3-phosphate = a 1-acyl-sn-glycero-3-phosphate + phosphate. It functions in the pathway lipid metabolism; phospholipid metabolism. Functionally, catalyzes the transfer of an acyl group from acyl-phosphate (acyl-PO(4)) to glycerol-3-phosphate (G3P) to form lysophosphatidic acid (LPA). This enzyme utilizes acyl-phosphate as fatty acyl donor, but not acyl-CoA or acyl-ACP. This is Glycerol-3-phosphate acyltransferase from Actinobacillus succinogenes (strain ATCC 55618 / DSM 22257 / CCUG 43843 / 130Z).